Here is a 488-residue protein sequence, read N- to C-terminus: Protein unzipped (488 aa).

The signal sequence occupies residues 1–21; it reads MTSNSCLISLGLLLVLIQILA. The Extracellular segment spans residues 22 to 465; sequence PAKAAEHSVF…DVALAGFGVN (444 aa). 4 N-linked (GlcNAc...) asparagine glycosylation sites follow: Asn-35, Asn-232, Asn-317, and Asn-374. Residues 380-400 show a composition bias toward low complexity; sequence TTTTTTTTSTSTTTHATTTST. Positions 380 to 453 are disordered; sequence TTTTTTTTST…EAPENMSSDP (74 aa). A glycan (N-linked (GlcNAc...) asparagine) is linked at Asn-448. Residues 466–486 traverse the membrane as a helical segment; that stretch reads AAGSTFIAGSALLTLLLTIFL. Over 487–488 the chain is Cytoplasmic; that stretch reads SL.

It localises to the membrane. Functionally, required for normal axon patterning during neurogenesis. The chain is Protein unzipped (uzip) from Drosophila melanogaster (Fruit fly).